The following is an 861-amino-acid chain: Leucine--tRNA ligase (861 aa).

A 'HIGH' region motif is present at residues 42–52; it reads PYPSGKLHMGH. The 'KMSKS' region signature appears at 619–623; sequence KMSKS. K622 is an ATP binding site.

Belongs to the class-I aminoacyl-tRNA synthetase family.

Its subcellular location is the cytoplasm. It carries out the reaction tRNA(Leu) + L-leucine + ATP = L-leucyl-tRNA(Leu) + AMP + diphosphate. This chain is Leucine--tRNA ligase, found in Actinobacillus pleuropneumoniae serotype 5b (strain L20).